Reading from the N-terminus, the 245-residue chain is UPF0328 protein ECU09_2010 (245 aa).

It belongs to the UPF0328 family.

This Encephalitozoon cuniculi (strain GB-M1) (Microsporidian parasite) protein is UPF0328 protein ECU09_2010.